A 1832-amino-acid chain; its full sequence is MAQPEGVLAWNPAFRPEDNDSVATDLARLALDSGKEVSETTDVDTHVSPPAEEFTDENGSIESKTAISADTSDQGAPDLVDSNTPAADNGSKPDTEEPDKPSRDESIFMQTDKSRAVEDVTENVPTENGNVDITSGLEEHVAEEPHYEGPEKSTGLAGRNDAQDLFEGNDTAWMDEAEGEVNGATVNGEASGTRPGFWDSLGDNERDNEDDFFNQLKTQTKPIYSPPETEARFEEGIPLLGQGAAPQNNHAHKGESQVDDVFGDDEDDESGFFSEIQKRTSAEGPPPITRKSTSQVIDSINAVSDSMFSKQLPAAAELNNSLAVPTADGEIKNSPSEEDLAARWQAELSDDADETMPTEDDLAARWQAELDDDDDDLLLDDDTTNAQRPPEAANIDHMNDTSMLQSPFGTPENLARPKVQPVSYTPHQPSTSDLLSGIPAQNTAAQPTNASMSSYFSAQAPPNPVTTRAESFAERSKEGYKSPYDIPEDLARPRRAVANSRTVVAQPGTVPKPPPRSSSIPAPPLKASTVSPAPLGTSSTAPTAPQKNFFEELPLPPPRPKSRPASSGRYTPNAPVSAPSLPQSIPPPANQYSNVPGAPQSNIGPPDPPQLQQPERLDPYSNLLAPNVPSAPAVPSTASRYSPRPPGVQAGVKPPPSPRYSPAPPQSTNAVAAAPRNRYASQPASISGQGAALQFQPRTSSPLAYHEKIHYEDQGQSEERPQLQSTASPPPLNHSHPSEQPVSSENKGPSGVDVLENVPPLSTRPQSPPKNPYAPSAYTNEFANRVAPVSTGPPIAGMTGVLNSSTEESPFVPPRRSQTQSPSQTLSPRLSVPSLDPFQRPASVHGSTSPTRTVNPYAPAPVPTHNRAPSQVLEFIPPTDGQQLDSLERWKGAPIFKFGFGGAVISCFPKHIPRYSAGQAAPMIKSCPGEVRISQLNDWLPAAEGIVQHPGPLKGKSKKKDLVAWLSSKIAAFENADIPDFDRLSPDASKLREEKTLLWKVIRVLVENDGVLEGSVEAQKSLRNLLFPNLQDSGPNQSLGDVFTPSATLQPLNAPSQPDAVDSRSVDLLRDTLVLGEREKAVWAAVDKRLWGHAMIIASRMDRSVWQQVVQEFVRREVRSATSRTESLAAFYEILAGNIEESIDELVPPSARAGLQMISKVDGHGPAKNSLDGLDSWRETVGLVLSNRSPDDQRALVALGRLLLSYNRTEAAHICFILSRVAVFGGLDDPQANIVLLGVDHQRLSSCAALYNDDSILLTEAYEFATSVLAGSSVSTLPHLLAFKLIHAWSLAERGRKSEAQQYCDAIAAALKATTKPSGYHNQHLFFGVDELSARLRETTSDGGSSWISRPSMEKVSGSMWAKFNSFVAGDDSDAASTGSVKAEEIGPFARVSGTPTISRSPSVSDIYGSYPVAAAQPLPATGPSRYQPVSQYAPSASPEQLRGRSSMDSQRSASFGYPLGQRRGSQEPSTPVDTNMFHGMPMYGSPPVAGYQSTPPQSSYMPLAPVAEDSASGAQQESFSAHSQVSDNAPSHRSSTYAPEPFGHPFDTQAVSTTSQPDQGGYMPPTSSGAYEPPSFESNTESADGAQDESTEEDKPKKKSIMDEDDDEDLAARAAAIQKAERARRDREADEAFRKAAEADAKKPPPATGKKGWFSGWFGGKKDDNSGGGPIRAKLGEENSFYYDTELKKWVNKKDPGSAAPTRGTPPPPKGSAPPSRSMSGSGGPPPAMATPPPTGASGSRPSSSAGAPTSVSASPAPPSLGAPPPAIPRSVSTGAVLPTPPSSSAGAPPRPATSLSNASSIDDLLGAPQARKGPAARGKKKGRYVDVMAK.

Disordered regions lie at residues 1–163 (MAQP…NDAQ), 183–209 (GATVNGEASGTRPGFWDSLGDNERDNE), 240–269 (LGQGAAPQNNHAHKGESQVDDVFGDDEDDE), 345–863 (QAEL…APVP), 1420–1482 (PATG…HGMP), 1509–1679 (EDSA…LGEE), and 1692–1832 (VNKK…VMAK). The span at 57-74 (ENGSIESKTAISADTSDQ) shows a compositional bias: polar residues. Over residues 91–118 (SKPDTEEPDKPSRDESIFMQTDKSRAVE) the composition is skewed to basic and acidic residues. Positions 123 to 133 (NVPTENGNVDI) are enriched in polar residues. The span at 137–151 (LEEHVAEEPHYEGPE) shows a compositional bias: basic and acidic residues. Acidic residues-rich tracts occupy residues 257-269 (QVDDVFGDDEDDE), 348-361 (LSDDADETMPTEDD), and 369-383 (ELDDDDDDLLLDDDT). Residues 422-457 (VSYTPHQPSTSDLLSGIPAQNTAAQPTNASMSSYFS) show a composition bias toward polar residues. Residues 471–480 (SFAERSKEGY) show a composition bias toward basic and acidic residues. Residues 510-524 (VPKPPPRSSSIPAPP) are compositionally biased toward pro residues. 2 stretches are compositionally biased toward polar residues: residues 528–546 (STVSPAPLGTSSTAPTAPQ) and 590–603 (NQYSNVPGAPQSNI). Residues 622–636 (NLLAPNVPSAPAVPS) are compositionally biased toward low complexity. Residues 653 to 665 (KPPPSPRYSPAPP) are compositionally biased toward pro residues. Residues 679-688 (YASQPASISG) show a composition bias toward polar residues. The segment covering 705-721 (YHEKIHYEDQGQSEERP) has biased composition (basic and acidic residues). The segment covering 738–747 (SEQPVSSENK) has biased composition (polar residues). Residues 814 to 829 (PRRSQTQSPSQTLSPR) show a composition bias toward low complexity. Composition is skewed to polar residues over residues 845-854 (HGSTSPTRTV), 1428-1439 (QPVSQYAPSASP), 1513-1538 (SGAQQESFSAHSQVSDNAPSHRSSTY), and 1550-1559 (QAVSTTSQPD). Basic and acidic residues-rich tracts occupy residues 1594-1603 (EDKPKKKSIM) and 1620-1644 (KAERARRDREADEAFRKAAEADAKK). Over residues 1725–1736 (GPPPAMATPPPT) the composition is skewed to pro residues. The segment covering 1737–1756 (GASGSRPSSSAGAPTSVSAS) has biased composition (low complexity). The segment covering 1757–1769 (PAPPSLGAPPPAI) has biased composition (pro residues).

Belongs to the SEC16 family.

It localises to the endoplasmic reticulum membrane. Its function is as follows. Involved in the initiation of assembly of the COPII coat required for the formation of transport vesicles from the endoplasmic reticulum (ER) and the selection of cargo molecules. Also involved in autophagy. The protein is COPII coat assembly protein sec16 (sec16) of Aspergillus fumigatus (strain ATCC MYA-4609 / CBS 101355 / FGSC A1100 / Af293) (Neosartorya fumigata).